Reading from the N-terminus, the 108-residue chain is Urease subunit beta (108 aa).

This sequence belongs to the urease beta subunit family. As to quaternary structure, heterotrimer of UreA (gamma), UreB (beta) and UreC (alpha) subunits. Three heterotrimers associate to form the active enzyme.

The protein resides in the cytoplasm. It carries out the reaction urea + 2 H2O + H(+) = hydrogencarbonate + 2 NH4(+). It participates in nitrogen metabolism; urea degradation; CO(2) and NH(3) from urea (urease route): step 1/1. The protein is Urease subunit beta of Trichormus variabilis (strain ATCC 29413 / PCC 7937) (Anabaena variabilis).